We begin with the raw amino-acid sequence, 284 residues long: tRNA pseudouridine synthase A (284 aa).

Asp-62 acts as the Nucleophile in catalysis. Tyr-123 contributes to the substrate binding site.

The protein belongs to the tRNA pseudouridine synthase TruA family. In terms of assembly, homodimer.

It catalyses the reaction uridine(38/39/40) in tRNA = pseudouridine(38/39/40) in tRNA. Formation of pseudouridine at positions 38, 39 and 40 in the anticodon stem and loop of transfer RNAs. In Streptomyces griseus subsp. griseus (strain JCM 4626 / CBS 651.72 / NBRC 13350 / KCC S-0626 / ISP 5235), this protein is tRNA pseudouridine synthase A.